An 870-amino-acid polypeptide reads, in one-letter code: MEASLAALERPRGSASNTVFKSGPLFISSKGLGWTSWKKRWFILTRTSLVFFKNDPGTLPQKGGEVNLTLGGIDLNNSGSVVVREDKKLLTVLFPDGRDGRAFTLKAETFEDLYEWKTALEQALAQAPNAALIMGQNGIFRAETNEAIEGREKRPLKSLVVGRPILLALEDIDGSPSFLEKALQFIEKYGTKIEGILRQSADVEEVERRVQEYEQGKTEFTFDEDPHVVGDCIKHVLRELPSSPVSASCCTALLEAYRIESKEARISSLRSAIAETFPEPNRRLLQRILKMMHTISSHSHENRMNPNAVAACMAPLLLRPLLAGECDLEDDFDGGEDNSAQLLAAANAANNAQAIITVLLEDYGSIFDEENIQRCSISTESHIGNSGPDDSSDDDNNMKNGYHNADNEVEPVTDDDNDRALSGKMSESSGCTGSDLYEYKGFVADDSDIESPRDTNGPRCNSNIRTDHLMRNPFVNSTDQQAGEQIGDDPTKYGVNSCLAHVSESYQQSGTGLNVPTHGNTLAAPGLESPSAKSVNKGTPSSVHAKRATFWGRGSARKISTDGSFDSSGEDELAIQRLETTKNELRQRIAKEARGNAILQASLERRKQALHERRLSLEQDVSRLQEQLQAERDLRAALEVGLSMSSGQFSSHGVDSKTRAELEEIALAEADVARLKQKVAELHHQLNQQRQTHFGSFSDARDTHQYLQNHNPQKRFLQQDFDSTLAYVNHERKQRHEENVLGAEWRNSKGAGSFGVGNSRQPSRKQIPESTNTTDSKISEESGKISVDKLSSIDSPSIPSTSRVLDITEYPRLNHPSAAASAALVELTTRLDFFKERRSQLMEQLQNLDLNYGGSSSQDFIHRPSSPPWN.

In terms of domain architecture, PH spans 18-125 (TVFKSGPLFI…WKTALEQALA (108 aa)). Positions 167 to 367 (LALEDIDGSP…VLLEDYGSIF (201 aa)) constitute a Rho-GAP domain. 2 disordered regions span residues 378–432 (STES…SGCT) and 446–465 (DSDI…SNIR). Over residues 407–417 (NEVEPVTDDDN) the composition is skewed to acidic residues. Residues 569 to 693 (GEDELAIQRL…HQLNQQRQTH (125 aa)) adopt a coiled-coil conformation. A disordered region spans residues 736 to 793 (HEENVLGAEWRNSKGAGSFGVGNSRQPSRKQIPESTNTTDSKISEESGKISVDKLSSI). A compositionally biased stretch (basic and acidic residues) spans 777 to 787 (KISEESGKISV).

In terms of biological role, acts as a GTPase activator for the Rac-type GTPase by converting it to an inactive GDP-bound state. The sequence is that of Rho GTPase-activating protein 7 (ROPGAP7) from Arabidopsis thaliana (Mouse-ear cress).